Consider the following 66-residue polypeptide: Large ribosomal subunit protein bL33c (66 aa).

This sequence belongs to the bacterial ribosomal protein bL33 family.

The protein localises to the plastid. It localises to the chloroplast. In Vitis vinifera (Grape), this protein is Large ribosomal subunit protein bL33c.